Here is a 418-residue protein sequence, read N- to C-terminus: Tyrosine--tRNA ligase (418 aa).

Y34 is an L-tyrosine binding site. Positions 39 to 48 (PTADSLHLGH) match the 'HIGH' region motif. L-tyrosine contacts are provided by Y169 and Q173. Residues 229–233 (KFGKS) carry the 'KMSKS' region motif. K232 lines the ATP pocket. The S4 RNA-binding domain occupies 352–418 (LNIVDLLVTA…GKKKYFVLTY (67 aa)).

Belongs to the class-I aminoacyl-tRNA synthetase family. TyrS type 1 subfamily. Homodimer.

The protein localises to the cytoplasm. It carries out the reaction tRNA(Tyr) + L-tyrosine + ATP = L-tyrosyl-tRNA(Tyr) + AMP + diphosphate + H(+). Its function is as follows. Catalyzes the attachment of tyrosine to tRNA(Tyr) in a two-step reaction: tyrosine is first activated by ATP to form Tyr-AMP and then transferred to the acceptor end of tRNA(Tyr). This is Tyrosine--tRNA ligase from Streptococcus gordonii (strain Challis / ATCC 35105 / BCRC 15272 / CH1 / DL1 / V288).